Reading from the N-terminus, the 376-residue chain is GTPase Obg (376 aa).

The region spanning 1–158 is the Obg domain; it reads MFIDSVNLTL…RDVRLELKLI (158 aa). Residues 159-359 form the OBG-type G domain; sequence ADVGLVGFPN…LKFSLLELLK (201 aa). Residues 165-172, 190-194, 212-215, 280-283, and 340-342 each bind GTP; these read GFPNVGKS, FTTLT, DIPG, TRMD, and SSA. Residues Ser172 and Thr192 each coordinate Mg(2+).

Belongs to the TRAFAC class OBG-HflX-like GTPase superfamily. OBG GTPase family. Monomer. Mg(2+) is required as a cofactor.

Its subcellular location is the cytoplasm. An essential GTPase which binds GTP, GDP and possibly (p)ppGpp with moderate affinity, with high nucleotide exchange rates and a fairly low GTP hydrolysis rate. Plays a role in control of the cell cycle, stress response, ribosome biogenesis and in those bacteria that undergo differentiation, in morphogenesis control. This Campylobacter curvus (strain 525.92) protein is GTPase Obg.